The chain runs to 114 residues: U17-barytoxin-Tl1d (114 aa).

Residues 1 to 20 form the signal peptide; that stretch reads MKTIIVFLSLLVLATKFGDA. The propeptide occupies 21 to 74; sequence NEGVNQEQMKEVIQNEFREDFLNEMAPMSLLQQLEAIESTLLEKEADRNSRQKR. 3 disulfides stabilise this stretch: C75–C88, C82–C93, and C87–C108.

Belongs to the neurotoxin 14 (magi-1) family. 03 (ICK-30-40) subfamily. In terms of tissue distribution, expressed by the venom gland.

It is found in the secreted. In terms of biological role, ion channel inhibitor. This Trittame loki (Brush-footed trapdoor spider) protein is U17-barytoxin-Tl1d.